The sequence spans 235 residues: Transmembrane emp24 domain-containing protein 9 (235 aa).

Positions 1–37 are cleaved as a signal peptide; that stretch reads MAAERSLWVVGLCPGSRLGRVVRVLLLLLWFAARGGA. The Lumenal segment spans residues 38–201; it reads LYFHIGETEK…FRQTSESTNQ (164 aa). Residues 47-145 enclose the GOLD domain; the sequence is KKCFIEEIPD…MLRVHLDIQV (99 aa). Residues 121–160 form a required for interaction with STX17 region; the sequence is CLHSNSTKFSLFAGGMLRVHLDIQVGEHANDYAEIAAKDK. Residue Asn125 is glycosylated (N-linked (GlcNAc...) asparagine). Residues 154 to 184 adopt a coiled-coil conformation; the sequence is EIAAKDKLSELQLRVRQLVEQVEQIQKEQNY. N6-acetyllysine is present on Lys160. The chain crosses the membrane as a helical span at residues 202–222; the sequence is RVLWWSILQTLILVAIGVWQM. The Cytoplasmic portion of the chain corresponds to 223–235; it reads RHLKSFFEAKKLV. Residues 228–229 carry the COPII vesicle coat-binding motif; that stretch reads FF. Residues 228–235 carry the COPI vesicle coat-binding motif; it reads FFEAKKLV.

Belongs to the EMP24/GP25L family. In terms of assembly, monomer and homodimer in endoplasmic reticulum. Predominantly monomeric and to lesser extent homodimeric in endoplasmic reticulum-Golgi intermediate compartment and cis-Golgi network. Probably oligomerizes with other members of the EMP24/GP25L family such as TMED2, TMED7 and TMED10. Interacts with TMED5. Interacts (via C-terminus) with COPG1; the interaction involves dimeric TMED9. Interacts with PTPN2 and SPAST. Interacts with STX17; the interaction is direct. Post-translationally, N-linked glycosylated containing high mannose.

It localises to the endoplasmic reticulum membrane. The protein resides in the golgi apparatus. The protein localises to the cis-Golgi network membrane. It is found in the endoplasmic reticulum-Golgi intermediate compartment membrane. Its subcellular location is the trans-Golgi network membrane. Its function is as follows. Appears to be involved in vesicular protein trafficking, mainly in the early secretory pathway. In COPI vesicle-mediated retrograde transport involved in the coatomer recruitment to membranes of the early secretory pathway. Increases coatomer-dependent activity of ARFGAP2. Thought to play a crucial role in the specific retention of p24 complexes in cis-Golgi membranes; specifically contributes to the coupled localization of TMED2 and TMED10 in the cis-Golgi network. May be involved in organization of intracellular membranes, such as of the ER-Golgi intermediate compartment and the Golgi apparatus. Involved in ER localization of PTPN2. The protein is Transmembrane emp24 domain-containing protein 9 (TMED9) of Bos taurus (Bovine).